Here is a 239-residue protein sequence, read N- to C-terminus: Phosphoribosylaminoimidazole-succinocarboxamide synthase (239 aa).

Belongs to the SAICAR synthetase family.

The catalysed reaction is 5-amino-1-(5-phospho-D-ribosyl)imidazole-4-carboxylate + L-aspartate + ATP = (2S)-2-[5-amino-1-(5-phospho-beta-D-ribosyl)imidazole-4-carboxamido]succinate + ADP + phosphate + 2 H(+). The protein operates within purine metabolism; IMP biosynthesis via de novo pathway; 5-amino-1-(5-phospho-D-ribosyl)imidazole-4-carboxamide from 5-amino-1-(5-phospho-D-ribosyl)imidazole-4-carboxylate: step 1/2. The sequence is that of Phosphoribosylaminoimidazole-succinocarboxamide synthase from Shouchella clausii (strain KSM-K16) (Alkalihalobacillus clausii).